Reading from the N-terminus, the 370-residue chain is F-box protein At3g20690 (370 aa).

In terms of domain architecture, F-box spans 1-45 (MMMSDLPHDLVEEILSRLPLISLKAMRSTCKTWNVLSKHRSFANK).

This chain is F-box protein At3g20690, found in Arabidopsis thaliana (Mouse-ear cress).